Consider the following 485-residue polypeptide: Pyruvate kinase (485 aa).

Arg-33 contacts substrate. K(+) contacts are provided by Asn-35, Ser-37, Asp-67, and Thr-68. Position 35–38 (35–38 (NFSH)) interacts with ATP. Positions 74 and 155 each coordinate ATP. Glu-221 lines the Mg(2+) pocket. The substrate site is built by Gly-244, Asp-245, and Thr-277. Asp-245 lines the Mg(2+) pocket.

It belongs to the pyruvate kinase family. Homotetramer. Mg(2+) serves as cofactor. It depends on K(+) as a cofactor.

The enzyme catalyses pyruvate + ATP = phosphoenolpyruvate + ADP + H(+). It participates in carbohydrate degradation; glycolysis; pyruvate from D-glyceraldehyde 3-phosphate: step 5/5. This is Pyruvate kinase (pyk) from Chlamydia trachomatis serovar L2 (strain ATCC VR-902B / DSM 19102 / 434/Bu).